Here is a 500-residue protein sequence, read N- to C-terminus: Nucleolar and spindle-associated protein 1 (500 aa).

4 disordered regions span residues 48–204 (KNET…NFKK), 241–299 (TKKS…ASKS), 319–353 (VRFS…PESE), and 365–500 (ELLP…VPVK). The segment covering 82-92 (THRRGRGRKPI) has biased composition (basic residues). Polar residues predominate over residues 113–127 (NMASSIDRTQQQNCT). A compositionally biased stretch (low complexity) spans 264 to 274 (SRLSLLSPLPR). The span at 276 to 298 (TGASPSRTPMSQRRSCRSSTASK) shows a compositional bias: polar residues. Residues 323-332 (EATKDNEHKR) show a composition bias toward basic and acidic residues. Polar residues predominate over residues 380 to 392 (ITLNTTTQPSPAT). Residues 442–451 (PWGESKENKP) are compositionally biased toward basic and acidic residues. Residues 452–469 (DPNSNVSVLKNNYKQPHL) are compositionally biased toward polar residues.

It belongs to the NUSAP family. In terms of assembly, interacts with DNA, microtubules, ipo7, kpna2 and kpnb1. Microtubule stabilization is inhibited by ipo7 and kpna2, while microtubule bundling is inhibited by kpnb1. Active GTP-bound ran causes dissociation of ipo7 and kpnb1.

The protein localises to the cytoplasm. It localises to the nucleus. It is found in the cytoskeleton. The protein resides in the spindle. Functionally, microtubule-associated protein with the capacity to bundle and stabilize microtubules. May associate with chromosomes and promote the organization of meiotic or mitotic spindle microtubules around them. The polypeptide is Nucleolar and spindle-associated protein 1 (nusap1) (Xenopus tropicalis (Western clawed frog)).